The chain runs to 291 residues: Feruloyl esterase B (291 aa).

An N-terminal signal peptide occupies residues Met1–Ala18. Asn117 is a glycosylation site (N-linked (GlcNAc...) asparagine). Catalysis depends on Ser136, which acts as the Charge relay system. The N-linked (GlcNAc...) asparagine glycan is linked to Asn179.

It belongs to the carbohydrate esterase 1 (CE1) family. Feruloyl esterase type B subfamily.

The protein resides in the secreted. It catalyses the reaction feruloyl-polysaccharide + H2O = ferulate + polysaccharide.. Functionally, feruloyl esterase which acts in synergy with xylanases in degradation of plant cell walls. Hydrolyzes the ester linkage of hydroxycinnamic acids (ferulic acid (FA) and p-coumaric acid) and diferulates present in plant cell walls. Is active on substrates containing ferulic acid ester linked to the C-5 and C-2 linkages of arabinofuranose, while it was found capable of de-esterifying acetylated glucuronoxylans. Efficiently releases ferulic acid (FA) from destarched wheat bran when incubated with an M3 xylanase. The polypeptide is Feruloyl esterase B (Fae1a) (Thermothelomyces thermophilus (strain ATCC 42464 / BCRC 31852 / DSM 1799) (Sporotrichum thermophile)).